Reading from the N-terminus, the 186-residue chain is MDTFSTKSLALQAQKKVLSKMASKAMVAVFVDNTSSEVLDELYQATKEFTRSRKEAQRVVKNLVKVAVKLAVLLRADQLDSNELAQLQRFRGRVRSLAMTALSFHQVDFTFDRRVLATGLLECRDLLHQAIGPHLTAKSHGRINHIFSHFANGDFLAALYSPAEPYRSHLCRICDGLGRMLDEGGI.

The protein belongs to the TNFAIP8 family. Interacts with FBXW5; TNFAIP8L1 competes with TSC2 to bind FBXW5 increasing TSC2 stability by preventing its ubiquitination. Detected in wide variety tissues, such as neurons in brain, hepatocytes, germ cells of female and male reproductive organs, muscular tissues and variety types of cells of the epithelial origin (at protein level).

It localises to the cytoplasm. In terms of biological role, acts as a negative regulator of mTOR activity. The sequence is that of Tumor necrosis factor alpha-induced protein 8-like protein 1 (Tnfaip8l1) from Mus musculus (Mouse).